Consider the following 355-residue polypeptide: MEDLEETLFEEFENYSYDLDYYSLESDLEEKVQLGVVHWVSLVLYCLAFVLGIPGNAIVIWFTGFKWKKTVTTLWFLNLAIADFIFLLFLPLYISYVAMNFHWPFGIWLCKANSFTAQLNMFASVFFLTVISLDHYIHLIHPVLSHRHRTLKNSLIVIIFIWLLASLIGGPALYFRDTVEFNNHTLCYNNFQKHDPDLTLIRHHVLTWVKFIIGYLFPLLTMSICYLCLIFKVKKRSILISSRHFWTILVVVVAFVVCWTPYHLFSIWELTIHHNSYSHHVMQAGIPLSTGLAFLNSCLNPILYVLISKKFQARFRSSVAEILKYTLWEVSCSGTVSEQLRNSETKNLCLLETAQ.

Topologically, residues 1–41 are extracellular; that stretch reads MEDLEETLFEEFENYSYDLDYYSLESDLEEKVQLGVVHWVS. N-linked (GlcNAc...) asparagine glycosylation occurs at N14. A helical membrane pass occupies residues 42 to 62; the sequence is LVLYCLAFVLGIPGNAIVIWF. The Cytoplasmic segment spans residues 63-73; that stretch reads TGFKWKKTVTT. Residues 74–94 traverse the membrane as a helical segment; sequence LWFLNLAIADFIFLLFLPLYI. The Extracellular portion of the chain corresponds to 95 to 112; that stretch reads SYVAMNFHWPFGIWLCKA. C110 and C187 are disulfide-bonded. The chain crosses the membrane as a helical span at residues 113-133; that stretch reads NSFTAQLNMFASVFFLTVISL. Topologically, residues 134-154 are cytoplasmic; the sequence is DHYIHLIHPVLSHRHRTLKNS. Residues 155-175 form a helical membrane-spanning segment; it reads LIVIIFIWLLASLIGGPALYF. Residues 176–210 lie on the Extracellular side of the membrane; sequence RDTVEFNNHTLCYNNFQKHDPDLTLIRHHVLTWVK. Residues 211 to 231 traverse the membrane as a helical segment; it reads FIIGYLFPLLTMSICYLCLIF. Over 232–247 the chain is Cytoplasmic; the sequence is KVKKRSILISSRHFWT. A helical membrane pass occupies residues 248-268; that stretch reads ILVVVVAFVVCWTPYHLFSIW. The Extracellular portion of the chain corresponds to 269-286; that stretch reads ELTIHHNSYSHHVMQAGI. The chain crosses the membrane as a helical span at residues 287–307; it reads PLSTGLAFLNSCLNPILYVLI. Topologically, residues 308–355 are cytoplasmic; the sequence is SKKFQARFRSSVAEILKYTLWEVSCSGTVSEQLRNSETKNLCLLETAQ.

It belongs to the chemokine-like receptor (CMKLR) family. As to expression, expressed in hippocampus.

It is found in the cell membrane. Its function is as follows. Receptor for chemoattractant adipokine chemerin/RARRES2 suggesting a role for this receptor in the regulation of inflammation and energy homesotasis. Signals mainly via beta-arrestin pathway. Binding of RARRES2 activates weakly G proteins, calcium mobilization and MAPK1/MAPK3 (ERK1/2) phosphorylation too. Also acts as a receptor for TAFA1, mediates its effects on neuronal stem-cell proliferation and differentiation via the activation of ROCK/ERK and ROCK/STAT3 signaling pathway. (Microbial infection) Coreceptor for HIV-1. The chain is Chemerin-like receptor 2 from Homo sapiens (Human).